Here is a 308-residue protein sequence, read N- to C-terminus: Homoserine O-acetyltransferase (308 aa).

Cysteine 142 serves as the catalytic Acyl-thioester intermediate. Substrate-binding residues include lysine 163 and serine 192. Histidine 235 (proton acceptor) is an active-site residue. Glutamate 237 is an active-site residue. Arginine 249 contributes to the substrate binding site.

The protein belongs to the MetA family.

The protein resides in the cytoplasm. The catalysed reaction is L-homoserine + acetyl-CoA = O-acetyl-L-homoserine + CoA. It functions in the pathway amino-acid biosynthesis; L-methionine biosynthesis via de novo pathway; O-acetyl-L-homoserine from L-homoserine: step 1/1. Transfers an acetyl group from acetyl-CoA to L-homoserine, forming acetyl-L-homoserine. This Agrobacterium fabrum (strain C58 / ATCC 33970) (Agrobacterium tumefaciens (strain C58)) protein is Homoserine O-acetyltransferase.